The following is a 325-amino-acid chain: Malate dehydrogenase (325 aa).

Position 11-17 (11-17 (GAAGQIA)) interacts with NAD(+). The substrate site is built by Arg-92 and Arg-98. NAD(+) is bound by residues Asn-105, Gln-112, and 129 to 131 (VGN). Residues Asn-131 and Arg-162 each coordinate substrate. His-187 functions as the Proton acceptor in the catalytic mechanism.

This sequence belongs to the LDH/MDH superfamily. MDH type 2 family.

The enzyme catalyses (S)-malate + NAD(+) = oxaloacetate + NADH + H(+). Functionally, catalyzes the reversible oxidation of malate to oxaloacetate. The polypeptide is Malate dehydrogenase (Methylococcus capsulatus (strain ATCC 33009 / NCIMB 11132 / Bath)).